A 205-amino-acid chain; its full sequence is Recombination protein RecR (205 aa).

The C4-type zinc-finger motif lies at 58-75 (CSECQNVTDRDSDPCVLC). Residues 83 to 182 (TVICVVESPV…AVSKIARGIP (100 aa)) enclose the Toprim domain.

Belongs to the RecR family.

Its function is as follows. May play a role in DNA repair. It seems to be involved in an RecBC-independent recombinational process of DNA repair. It may act with RecF and RecO. The sequence is that of Recombination protein RecR from Chlorobium phaeobacteroides (strain DSM 266 / SMG 266 / 2430).